The following is a 611-amino-acid chain: Growth hormone receptor (611 aa).

A signal peptide spans 1–20; it reads MDLRHLLLTLVLVCANDSLS. A glycan (N-linked (GlcNAc...) asparagine) is linked at N16. The Extracellular segment spans residues 21–240; that stretch reads ASDDVLRLPQ…EFVHCAEEIE (220 aa). A disulfide bridge connects residues C34 and C44. The N-linked (GlcNAc...) asparagine glycan is linked to N53. A disulfide bridge connects residues C75 and C86. N-linked (GlcNAc...) asparagine glycosylation occurs at N89. C100 and C114 are joined by a disulfide. Residues 125 to 228 enclose the Fibronectin type-III domain; it reads PPVHLNWTLL…EILYVSFSQA (104 aa). N-linked (GlcNAc...) asparagine glycosylation is found at N130, N135, and N174. The WSXWS motif signature appears at 214–218; it reads FGEFS. The chain crosses the membrane as a helical span at residues 241–264; the sequence is FPWFLVVIFGACGLAVTVILILLS. Residues 265–611 are Cytoplasmic-facing; it reads KQSRLKMLIF…STDQLNKIMP (347 aa). The tract at residues 270–355 is required for JAK2 binding; it reads KMLIFPPVPV…HLKSHSCLGA (86 aa). Residues 273–281 carry the Box 1 motif motif; that stretch reads IFPPVPVPK. The UbE motif motif lies at 316–325; the sequence is DLWVEFIELD. Positions 411-455 are disordered; that stretch reads SLPSLANTDTQQPRMSTRPENSQPWPPFADSIDAASPSAHNQLSN. The segment covering 414–433 has biased composition (polar residues); that stretch reads SLANTDTQQPRMSTRPENSQ.

The protein belongs to the type I cytokine receptor family. Type 1 subfamily. The soluble form (GHBP) is produced by phorbol ester-promoted proteolytic cleavage at the cell surface (shedding) by ADAM17/TACE.

It localises to the cell membrane. The protein resides in the secreted. Functionally, receptor for pituitary gland growth hormone (GH1) involved in regulating postnatal body growth. On ligand binding, couples to the JAK2/STAT5 pathway. In terms of biological role, the soluble form (GHBP) acts as a reservoir of growth hormone in plasma and may be a modulator/inhibitor of GH signaling. This chain is Growth hormone receptor (GHR), found in Columba livia (Rock dove).